The chain runs to 271 residues: Glutamate racemase (271 aa).

Substrate-binding positions include 12-13 and 44-45; these read DS and YG. Cysteine 75 serves as the catalytic Proton donor/acceptor. Residue 76–77 participates in substrate binding; it reads NT. Cysteine 185 (proton donor/acceptor) is an active-site residue. A substrate-binding site is contributed by 186–187; the sequence is TH.

The protein belongs to the aspartate/glutamate racemases family.

It catalyses the reaction L-glutamate = D-glutamate. It participates in cell wall biogenesis; peptidoglycan biosynthesis. Provides the (R)-glutamate required for cell wall biosynthesis. The polypeptide is Glutamate racemase (Mycobacterium marinum (strain ATCC BAA-535 / M)).